The following is a 262-amino-acid chain: Acyl-coenzyme A diphosphatase FITM2 (262 aa).

The Cytoplasmic portion of the chain corresponds to 1-23; the sequence is MEHLERCAWVLRGTLVRSAVRKY. The chain crosses the membrane as a helical span at residues 24-44; sequence LPWALAASMLAGSLLKELSPL. Residues 45-57 are Lumenal-facing; sequence PESYLSNKRNVLN. The helical transmembrane segment at 58 to 78 threads the bilayer; sequence VYFVKVAWAWTFCLLLPFIAL. At 79–93 the chain is on the cytoplasmic side; it reads TNYHLTGKAGLVLRR. A helical transmembrane segment spans residues 94–114; that stretch reads LSTLLVGTAIWYVCTAIFSNI. Residues 115-145 lie on the Lumenal side of the membrane; sequence EHYTGSCYQSPALEGERKEHQSKQQCHGEGG. The helical transmembrane segment at 146-166 threads the bilayer; the sequence is FWHGFDISGHSFLLTFCALMI. Residue His-155 is part of the active site. At 167-190 the chain is on the cytoplasmic side; sequence VEEMAVLHEVKTDRNHCLHAAITT. A helical transmembrane segment spans residues 191–211; sequence LVVALGFLTFIWVWMFLCTAV. Residues 212-218 lie on the Lumenal side of the membrane; it reads YFHNLSQ. Residue His-214 is part of the active site. A helical membrane pass occupies residues 219–239; the sequence is KVFGTLFGLLGWYGTYGCWYL. Topologically, residues 240-262 are cytoplasmic; it reads KSFSPGLPPQSSSLNLKQDTYKK.

The protein belongs to the FIT family. FIT2 subfamily.

Its subcellular location is the endoplasmic reticulum membrane. It carries out the reaction an acyl-CoA + H2O = an acyl-4'-phosphopantetheine + adenosine 3',5'-bisphosphate + 2 H(+). It catalyses the reaction (9Z)-octadecenoyl-CoA + H2O = S-(9Z-octadecenoyl)-4'-phosphopantetheine + adenosine 3',5'-bisphosphate + 2 H(+). The enzyme catalyses (5Z,8Z,11Z,14Z)-eicosatetraenoyl-CoA + H2O = S-(5Z,8Z,11Z,14Z-eicosatetraenoyl)-4'-phosphopantetheine + adenosine 3',5'-bisphosphate + 2 H(+). The catalysed reaction is hexadecanoyl-CoA + H2O = S-hexadecanoyl-4'-phosphopantetheine + adenosine 3',5'-bisphosphate + 2 H(+). Fatty acyl-coenzyme A (CoA) diphosphatase that hydrolyzes fatty acyl-CoA to yield acyl-4'-phosphopantetheine and adenosine 3',5'-bisphosphate. Preferentially hydrolyzes unsaturated long-chain acyl-CoA substrates such as oleoyl-CoA/(9Z)-octadecenoyl-CoA and arachidonoyl-CoA/(5Z,8Z,11Z,14Z)-eicosatetraenoyl-CoA in the endoplasmic reticulum (ER) lumen. This catalytic activity is required for maintaining ER structure and for lipid droplets (LDs) biogenesis, which are lipid storage organelles involved in maintaining lipid and energy homeostasis. Directly binds to diacylglycerol (DAGs) and triacylglycerol, which is also important for LD biogenesis. May support directional budding of nacent LDs from the ER into the cytosol by reducing DAG levels at sites of LD formation. Plays a role in the regulation of cell morphology and cytoskeletal organization. In Bos taurus (Bovine), this protein is Acyl-coenzyme A diphosphatase FITM2.